A 1030-amino-acid chain; its full sequence is Probable serine/threonine-protein kinase SIS8 (1030 aa).

Composition is skewed to polar residues over residues 44–58 and 399–419; these read PNQS…STTK and YSAS…NGIE. Disordered stretches follow at residues 44–84, 399–474, 555–625, and 689–736; these read PNQS…PEIK, YSAS…KAPF, TVES…ASST, and LGSN…SDCD. Composition is skewed to basic and acidic residues over residues 426–435, 458–471, and 560–580; these read TEFRTGEHRS, ISRE…KVEK, and NSTE…EGRH. The span at 613–625 shows a compositional bias: low complexity; it reads SQSDSSHSEASST. A Protein kinase domain is found at 748 to 1003; the sequence is ITVGERIGLG…AEIMASLKRL (256 aa). ATP-binding positions include 754–762 and K775; that span reads IGLGSYGEV. D871 acts as the Proton acceptor in catalysis. Over residues 1007-1023 the composition is skewed to polar residues; that stretch reads VTGSNIPRPVPSSSSLP. Positions 1007-1030 are disordered; that stretch reads VTGSNIPRPVPSSSSLPTEHEQKD.

This sequence belongs to the protein kinase superfamily. Ser/Thr protein kinase family. As to quaternary structure, interacts with UGT72E1. As to expression, expressed roots, rosette and cauline leaves, and at lower levels in flowers and siliques.

It is found in the nucleus. It carries out the reaction L-seryl-[protein] + ATP = O-phospho-L-seryl-[protein] + ADP + H(+). The catalysed reaction is L-threonyl-[protein] + ATP = O-phospho-L-threonyl-[protein] + ADP + H(+). Functionally, acts as a negative regulator of salt tolerance. Mediates sugar response during early seedling development. The sequence is that of Probable serine/threonine-protein kinase SIS8 from Arabidopsis thaliana (Mouse-ear cress).